The following is a 347-amino-acid chain: Protein RecA (347 aa).

Residue Gly64–Thr71 participates in ATP binding. Positions Asp328–Lys347 are disordered.

Belongs to the RecA family.

It is found in the cytoplasm. Functionally, can catalyze the hydrolysis of ATP in the presence of single-stranded DNA, the ATP-dependent uptake of single-stranded DNA by duplex DNA, and the ATP-dependent hybridization of homologous single-stranded DNAs. It interacts with LexA causing its activation and leading to its autocatalytic cleavage. This chain is Protein RecA, found in Oceanobacillus iheyensis (strain DSM 14371 / CIP 107618 / JCM 11309 / KCTC 3954 / HTE831).